A 349-amino-acid polypeptide reads, in one-letter code: Homoserine O-succinyltransferase (349 aa).

The active-site Acyl-thioester intermediate is cysteine 146. 2 residues coordinate substrate: lysine 167 and serine 196. Residue histidine 239 is the Proton acceptor of the active site. The active site involves glutamate 241. Arginine 253 is a substrate binding site.

It belongs to the MetA family.

Its subcellular location is the cytoplasm. The catalysed reaction is L-homoserine + succinyl-CoA = O-succinyl-L-homoserine + CoA. It functions in the pathway amino-acid biosynthesis; L-methionine biosynthesis via de novo pathway; O-succinyl-L-homoserine from L-homoserine: step 1/1. Transfers a succinyl group from succinyl-CoA to L-homoserine, forming succinyl-L-homoserine. In vitro, can also use glutaryl-CoA as acyl donor. This chain is Homoserine O-succinyltransferase, found in Thiobacillus denitrificans (strain ATCC 25259 / T1).